Here is a 1012-residue protein sequence, read N- to C-terminus: Antigenic heat-stable 120 kDa protein (1012 aa).

2 disordered regions span residues aspartate 1–proline 73 and glycine 348–glutamine 396. Basic and acidic residues predominate over residues glutamate 12–glutamate 27. Positions serine 47–serine 61 are enriched in low complexity. Composition is skewed to polar residues over residues glycine 62–proline 73, glycine 348–glutamine 373, and proline 380–glutamine 396.

It is found in the cytoplasm. The sequence is that of Antigenic heat-stable 120 kDa protein (sca4) from Rickettsia slovaca.